Here is a 263-residue protein sequence, read N- to C-terminus: Diphthine synthase (263 aa).

Residues Leu11, Asp89, Ala92, 117–118 (SV), Leu166, and Leu208 contribute to the S-adenosyl-L-methionine site.

This sequence belongs to the diphthine synthase family. Homodimer.

It carries out the reaction 2-[(3S)-amino-3-carboxypropyl]-L-histidyl-[translation elongation factor 2] + 3 S-adenosyl-L-methionine = diphthine-[translation elongation factor 2] + 3 S-adenosyl-L-homocysteine + 3 H(+). The protein operates within protein modification; peptidyl-diphthamide biosynthesis. In terms of biological role, S-adenosyl-L-methionine-dependent methyltransferase that catalyzes the trimethylation of the amino group of the modified target histidine residue in translation elongation factor 2 (EF-2), to form an intermediate called diphthine. The three successive methylation reactions represent the second step of diphthamide biosynthesis. The protein is Diphthine synthase of Methanopyrus kandleri (strain AV19 / DSM 6324 / JCM 9639 / NBRC 100938).